The following is a 410-amino-acid chain: Lissencephaly-1 homolog B (410 aa).

The LisH domain occupies 7–39; sequence QRDELNRAIADYLRSNGYEEAYSTFKKEAELDM. Residues 56–82 adopt a coiled-coil conformation; the sequence is TSVIRLQKKVMELESKLNEAKEEITLG. WD repeat units lie at residues 106 to 147, 148 to 187, 190 to 229, 232 to 271, 274 to 333, 336 to 375, and 378 to 410; these read GHRS…RTLK, GHTD…CIRT, GHDH…CVKT, GHRE…CKAE, EHEH…CLMT, GHDN…CMKT, and AHEH…WECR.

The protein belongs to the WD repeat LIS1/nudF family. Can self-associate. Component of the cytosolic PAF-AH (I) heterotetrameric enzyme, which is composed of PAFAH1B1 (beta), PAFAH1B2 (alpha2) and PAFAH1B3 (alpha1) subunits. The catalytic activity of the enzyme resides in the alpha1 (PAFAH1B3) and alpha2 (PAFAH1B2) subunits, whereas the beta subunit (PAFAH1B1) has regulatory activity. Trimer formation is not essential for the catalytic activity. Interacts with dynein, dynactin, nde1 and ndel1.

The protein localises to the cytoplasm. It localises to the cytoskeleton. Its subcellular location is the microtubule organizing center. It is found in the centrosome. In terms of biological role, regulatory subunit (beta subunit) of the cytosolic type I platelet-activating factor (PAF) acetylhydrolase (PAF-AH (I)), an enzyme that catalyzes the hydrolyze of the acetyl group at the sn-2 position of PAF and its analogs and participates in PAF inactivation. Regulates the PAF-AH (I) activity in a catalytic dimer composition-dependent manner. Positively regulates the activity of the minus-end directed microtubule motor protein dynein. May enhance dynein-mediated microtubule sliding by targeting dynein to the microtubule plus end. Required for several dynein- and microtubule-dependent processes such as the maintenance of Golgi integrity, the peripheral transport of microtubule fragments and the coupling of the nucleus and centrosome. May be required for proliferation of neuronal precursors and neuronal migration. This is Lissencephaly-1 homolog B (pafah1b1-2) from Salmo salar (Atlantic salmon).